We begin with the raw amino-acid sequence, 206 residues long: MTAFVVTGTDTGVGKTIFSAALTGALNAHYWKPVQAGLEDGADRDHVARLAGVPASHVLPESYRLNTPCSPHRAAELDGVVLDLARIALPDVRPLVVEGAGGALVPVTRNTTYADVFAWWNLPVVIVARTGLGTINHSLLTIEALRARGVPIHGVAFVGDAVEDSEATICAMGEVRRLGRLPMLGQLDRPALAQAFAEGFRVEDFA.

Residue Gly-12–Ile-17 coordinates ATP. Position 16 (Thr-16) interacts with Mg(2+). Residue Lys-32 is part of the active site. Mg(2+)-binding residues include His-46 and Glu-98. Position 98–101 (Glu-98–Gly-101) interacts with ATP.

The protein belongs to the dethiobiotin synthetase family. Homodimer. The cofactor is Mg(2+).

Its subcellular location is the cytoplasm. It carries out the reaction (7R,8S)-7,8-diammoniononanoate + CO2 + ATP = (4R,5S)-dethiobiotin + ADP + phosphate + 3 H(+). The protein operates within cofactor biosynthesis; biotin biosynthesis; biotin from 7,8-diaminononanoate: step 1/2. Its function is as follows. Catalyzes a mechanistically unusual reaction, the ATP-dependent insertion of CO2 between the N7 and N8 nitrogen atoms of 7,8-diaminopelargonic acid (DAPA, also called 7,8-diammoniononanoate) to form a ureido ring. The sequence is that of ATP-dependent dethiobiotin synthetase BioD from Novosphingobium aromaticivorans (strain ATCC 700278 / DSM 12444 / CCUG 56034 / CIP 105152 / NBRC 16084 / F199).